The following is a 394-amino-acid chain: Elongation factor Tu (394 aa).

One can recognise a tr-type G domain in the interval lysine 10 to glutamate 204. The tract at residues glycine 19 to threonine 26 is G1. Glycine 19–threonine 26 contacts GTP. Residue threonine 26 coordinates Mg(2+). The interval glycine 60–asparagine 64 is G2. Positions aspartate 81 to glycine 84 are G3. Residues aspartate 81–histidine 85 and asparagine 136–aspartate 139 contribute to the GTP site. The interval asparagine 136 to aspartate 139 is G4. Residues serine 174–leucine 176 are G5.

It belongs to the TRAFAC class translation factor GTPase superfamily. Classic translation factor GTPase family. EF-Tu/EF-1A subfamily. As to quaternary structure, monomer.

It is found in the cytoplasm. It catalyses the reaction GTP + H2O = GDP + phosphate + H(+). Functionally, GTP hydrolase that promotes the GTP-dependent binding of aminoacyl-tRNA to the A-site of ribosomes during protein biosynthesis. In Shewanella sediminis (strain HAW-EB3), this protein is Elongation factor Tu.